A 99-amino-acid chain; its full sequence is Integration host factor subunit alpha (99 aa).

The segment at 49-71 (FGNFDLRDKNQRPGRNPKTGEDI) is disordered.

This sequence belongs to the bacterial histone-like protein family. In terms of assembly, heterodimer of an alpha and a beta chain.

This protein is one of the two subunits of integration host factor, a specific DNA-binding protein that functions in genetic recombination as well as in transcriptional and translational control. The chain is Integration host factor subunit alpha from Shewanella denitrificans (strain OS217 / ATCC BAA-1090 / DSM 15013).